A 908-amino-acid chain; its full sequence is Protein translocase subunit SecA (908 aa).

Residues Gln-87, 105-109 (GEGKT), and Asp-507 contribute to the ATP site. Residues 860–898 (EALGNAEESDEASDQSVKTFERAGAKVGRNDPCPCGSGK) form a disordered region. Residues Cys-892, Cys-894, Cys-903, and His-904 each coordinate Zn(2+).

This sequence belongs to the SecA family. As to quaternary structure, monomer and homodimer. Part of the essential Sec protein translocation apparatus which comprises SecA, SecYEG and auxiliary proteins SecDF-YajC and YidC. The cofactor is Zn(2+).

The protein localises to the cell inner membrane. The protein resides in the cytoplasm. It catalyses the reaction ATP + H2O + cellular proteinSide 1 = ADP + phosphate + cellular proteinSide 2.. Its function is as follows. Part of the Sec protein translocase complex. Interacts with the SecYEG preprotein conducting channel. Has a central role in coupling the hydrolysis of ATP to the transfer of proteins into and across the cell membrane, serving both as a receptor for the preprotein-SecB complex and as an ATP-driven molecular motor driving the stepwise translocation of polypeptide chains across the membrane. This chain is Protein translocase subunit SecA, found in Methylobacillus flagellatus (strain ATCC 51484 / DSM 6875 / VKM B-1610 / KT).